Here is a 20-residue protein sequence, read N- to C-terminus: Large ribosomal subunit protein bL31 (20 aa).

Residues X16 and X18 each coordinate Zn(2+).

This sequence belongs to the bacterial ribosomal protein bL31 family. Type A subfamily. As to quaternary structure, part of the 50S ribosomal subunit. The cofactor is Zn(2+).

In terms of biological role, binds the 23S rRNA. This chain is Large ribosomal subunit protein bL31 (rpmE), found in Ectopseudomonas mendocina (Pseudomonas mendocina).